The following is a 291-amino-acid chain: Cell division protein FtsX (291 aa).

Residues Met1 to Phe18 are Cytoplasmic-facing. A helical membrane pass occupies residues Ser19–Ile39. Residues Asn40–Lys162 lie on the Periplasmic side of the membrane. A helical transmembrane segment spans residues Val163–Asn183. Residues Ser184–Lys220 lie on the Cytoplasmic side of the membrane. Residues Leu221 to Glu241 traverse the membrane as a helical segment. Residues Thr242–Lys253 are Periplasmic-facing. A helical membrane pass occupies residues Ala254–Ser274. The Cytoplasmic portion of the chain corresponds to Thr275–Tyr291.

The protein belongs to the ABC-4 integral membrane protein family. FtsX subfamily.

It is found in the cell inner membrane. Required for cell division and gliding motility. The polypeptide is Cell division protein FtsX (Flavobacterium johnsoniae (strain ATCC 17061 / DSM 2064 / JCM 8514 / BCRC 14874 / CCUG 350202 / NBRC 14942 / NCIMB 11054 / UW101) (Cytophaga johnsonae)).